A 418-amino-acid chain; its full sequence is Glutamyl-tRNA reductase (418 aa).

Substrate contacts are provided by residues 49–52 (TCNR), Ser-107, 112–114 (EPQ), and Gln-118. The Nucleophile role is filled by Cys-50. 187–192 (GAGETI) contributes to the NADP(+) binding site.

This sequence belongs to the glutamyl-tRNA reductase family. As to quaternary structure, homodimer.

It catalyses the reaction (S)-4-amino-5-oxopentanoate + tRNA(Glu) + NADP(+) = L-glutamyl-tRNA(Glu) + NADPH + H(+). Its pathway is porphyrin-containing compound metabolism; protoporphyrin-IX biosynthesis; 5-aminolevulinate from L-glutamyl-tRNA(Glu): step 1/2. Catalyzes the NADPH-dependent reduction of glutamyl-tRNA(Glu) to glutamate 1-semialdehyde (GSA). The protein is Glutamyl-tRNA reductase of Aeromonas salmonicida (strain A449).